We begin with the raw amino-acid sequence, 651 residues long: MARGSAVAWAAFGPLLWGCALGLQGGMLYPQESRSRERKELDGLWSFRADFSDNRRRGFEEQWYRRPLRESGPTLDMPVPSSFNDISQDWRLRHFVGWVWYEREVILPERWTQDLHTRVVLRIGSAHSYAIVWVNGVDTLEHEGGYLPFEADISNLVQVGPLPSRLRITIAINNTLTPTTLPPGTIQYMNDTSKYPKGYFVQNTYFDFFNYAGLQRSVLLYTTPTTYIDDITVTTGVEQDSGLVNYQISVKGSNLFELEARLLDAENKVVANGTGTQGQLKVPGASLWWPYLMHERPAYLYSLEVRLTAQTSLGPVSDFYSLPVGIRTVAVTESQFLINGKPFYFHGVNKHEDADIRGKGFDWPLLVKDFNLLRWLGANAFRTSHYPYAEEVLQMCDRHGIVVIDECPGVGLALPQFFNNVSLHHHMRVMEEVVRRDKNHPAVVMWSVANEPASHLESAGYYLKMVIAHTKALDPSRPVTFVSNSNYAADKGAPYVDVICLNSYYSWYHDYGHLELIQLQLATQFENWYKKYQKPIIQSEYGAETIAGFHQDPPLMFTEEYQKSLLEQYHLGLDQKRRKYVVGELIWNFADFMTEQSLTRVLGNKKGIFTRQRQPKSAAFLLRERYWKIANETRYPHSVAKSQCLENSPFT.

An N-terminal signal peptide occupies residues 1 to 22; the sequence is MARGSAVAWAAFGPLLWGCALG. Asn-173, Asn-190, Asn-272, and Asn-420 each carry an N-linked (GlcNAc...) asparagine glycan. The active-site Proton donor is Glu-451. Residue Asn-631 is glycosylated (N-linked (GlcNAc...) asparagine).

Belongs to the glycosyl hydrolase 2 family. Homotetramer.

Its subcellular location is the lysosome. It catalyses the reaction a beta-D-glucuronoside + H2O = D-glucuronate + an alcohol. With respect to regulation, inhibited by L-aspartic acid. Functionally, plays an important role in the degradation of dermatan and keratan sulfates. This Pongo abelii (Sumatran orangutan) protein is Beta-glucuronidase (GUSB).